Reading from the N-terminus, the 452-residue chain is Dimethyladenosine transferase 2, mitochondrial (452 aa).

S-adenosyl-L-methionine contacts are provided by Ile46, Glu99, and Asp125. The disordered stretch occupies residues 408 to 452 (ANDEPNLEDGVTLPEEDDAEADEIIEEESPVPATTPVKRRRKASS). Residues 421–436 (PEEDDAEADEIIEEES) are compositionally biased toward acidic residues.

This sequence belongs to the class I-like SAM-binding methyltransferase superfamily. rRNA adenine N(6)-methyltransferase family. KsgA subfamily.

It is found in the mitochondrion. Its function is as follows. Probable S-adenosyl-L-methionine-dependent methyltransferase which specifically dimethylates mitochondrial 12S rRNA at the conserved stem loop. Also required for basal transcription of mitochondrial DNA. Also regulates mitochondrial DNA copy number. Stimulates transcription independently of the methyltransferase activity. The chain is Dimethyladenosine transferase 2, mitochondrial (mtTFB2) from Drosophila melanogaster (Fruit fly).